The following is a 511-amino-acid chain: Glucans biosynthesis protein G (511 aa).

The signal sequence occupies residues 1–22; it reads MMKMRWLGAAIMLTLYASSSWA.

Belongs to the OpgD/OpgG family.

The protein localises to the periplasm. Its pathway is glycan metabolism; osmoregulated periplasmic glucan (OPG) biosynthesis. Its function is as follows. Involved in the biosynthesis of osmoregulated periplasmic glucans (OPGs). This is Glucans biosynthesis protein G from Salmonella paratyphi A (strain ATCC 9150 / SARB42).